The sequence spans 337 residues: tRNA N6-adenosine threonylcarbamoyltransferase (337 aa).

Residues His-111 and His-115 each coordinate Fe cation. Substrate-binding positions include 134 to 138 (LVSGG), Asp-167, Gly-180, and Asn-272. Asp-300 is a binding site for Fe cation.

The protein belongs to the KAE1 / TsaD family. Fe(2+) is required as a cofactor.

It is found in the cytoplasm. The catalysed reaction is L-threonylcarbamoyladenylate + adenosine(37) in tRNA = N(6)-L-threonylcarbamoyladenosine(37) in tRNA + AMP + H(+). In terms of biological role, required for the formation of a threonylcarbamoyl group on adenosine at position 37 (t(6)A37) in tRNAs that read codons beginning with adenine. Is involved in the transfer of the threonylcarbamoyl moiety of threonylcarbamoyl-AMP (TC-AMP) to the N6 group of A37, together with TsaE and TsaB. TsaD likely plays a direct catalytic role in this reaction. In Salmonella typhi, this protein is tRNA N6-adenosine threonylcarbamoyltransferase.